A 37-amino-acid polypeptide reads, in one-letter code: Cytochrome b6-f complex subunit 5 (37 aa).

Residues 5-25 form a helical membrane-spanning segment; sequence LLSGIVLGLMPVTLAGLFTTA.

It belongs to the PetG family. As to quaternary structure, the 4 large subunits of the cytochrome b6-f complex are cytochrome b6, subunit IV (17 kDa polypeptide, PetD), cytochrome f and the Rieske protein, while the 4 small subunits are PetG, PetL, PetM and PetN. The complex functions as a dimer.

It localises to the plastid. The protein localises to the chloroplast thylakoid membrane. Component of the cytochrome b6-f complex, which mediates electron transfer between photosystem II (PSII) and photosystem I (PSI), cyclic electron flow around PSI, and state transitions. PetG is required for either the stability or assembly of the cytochrome b6-f complex. This is Cytochrome b6-f complex subunit 5 from Ostreococcus tauri.